The primary structure comprises 1400 residues: DNA-directed RNA polymerase subunit beta' (1400 aa).

4 residues coordinate Zn(2+): Cys70, Cys72, Cys85, and Cys88. Asp460, Asp462, and Asp464 together coordinate Mg(2+). Zn(2+)-binding residues include Cys814, Cys888, Cys895, and Cys898. Positions 1368-1400 are disordered; the sequence is RQAKRAEAQEGPSAEQATDNLAALLNAGFSSDE.

Belongs to the RNA polymerase beta' chain family. In terms of assembly, the RNAP catalytic core consists of 2 alpha, 1 beta, 1 beta' and 1 omega subunit. When a sigma factor is associated with the core the holoenzyme is formed, which can initiate transcription. The cofactor is Mg(2+). It depends on Zn(2+) as a cofactor.

It carries out the reaction RNA(n) + a ribonucleoside 5'-triphosphate = RNA(n+1) + diphosphate. Functionally, DNA-dependent RNA polymerase catalyzes the transcription of DNA into RNA using the four ribonucleoside triphosphates as substrates. The chain is DNA-directed RNA polymerase subunit beta' from Vibrio parahaemolyticus serotype O3:K6 (strain RIMD 2210633).